Consider the following 311-residue polypeptide: E3 ubiquitin-protein ligase RNF126 (311 aa).

Residues Cys-13, Cys-16, Cys-29, and Cys-32 each contribute to the Zn(2+) site. The C4-type zinc finger occupies 13–32; that stretch reads CHSCTAEIIPRLPEYTCPRC. Disordered regions lie at residues 42-62 and 95-133; these read ETRN…NRPS and GTSG…RRAA. Residues 101–114 show a composition bias toward basic and acidic residues; it reads EEPRDGESRREHQS. A compositionally biased stretch (basic residues) spans 123 to 133; the sequence is PRARLSTRRAA. The RING-type zinc finger occupies 227-268; sequence CPVCKEDYTVGESVRQLPCNHLFHNDCIIPWLEQHDTCPVCR. Residues 274–311 form a disordered region; the sequence is QNTATNPPGLTEMTFSSSSTSSSSSTSPTDENNAANNS. Over residues 289–300 the composition is skewed to low complexity; sequence SSSSTSSSSSTS. Positions 301–311 are enriched in polar residues; sequence PTDENNAANNS.

Its subcellular location is the cytoplasm. It is found in the nucleus. It catalyses the reaction S-ubiquitinyl-[E2 ubiquitin-conjugating enzyme]-L-cysteine + [acceptor protein]-L-lysine = [E2 ubiquitin-conjugating enzyme]-L-cysteine + N(6)-ubiquitinyl-[acceptor protein]-L-lysine.. It functions in the pathway protein modification; protein ubiquitination. In terms of biological role, E3 ubiquitin-protein ligase that mediates ubiquitination oF target proteins. Depending on the associated E2 ligase, mediates 'Lys-27'-, 'Lys-29'-, 'Lys-48'- and/or 'Lys-63'-linked polyubiquitination of substrates. Part of a BAG6-dependent quality control process ensuring that proteins of the secretory pathway that are mislocalized to the cytosol are degraded by the proteasome. Probably acts by providing the ubiquitin ligase activity associated with the BAG6 complex and be responsible for ubiquitination of the hydrophobic mislocalized proteins and their targeting to the proteasome. This Xenopus tropicalis (Western clawed frog) protein is E3 ubiquitin-protein ligase RNF126.